Reading from the N-terminus, the 269-residue chain is Type 4 prepilin-like proteins leader peptide-processing enzyme (269 aa).

Helical transmembrane passes span methionine 13 to tryptophan 33, tyrosine 102 to glutamate 122, glycine 124 to leucine 144, glutamine 147 to alanine 167, valine 178 to valine 198, leucine 210 to isoleucine 230, and leucine 249 to phenylalanine 269.

The protein belongs to the peptidase A24 family.

It localises to the cell inner membrane. It catalyses the reaction Typically cleaves a -Gly-|-Phe- bond to release an N-terminal, basic peptide of 5-8 residues from type IV prepilin, and then N-methylates the new N-terminal amino group, the methyl donor being S-adenosyl-L-methionine.. Cleaves type-4 fimbrial leader sequence and methylates the N-terminal (generally Phe) residue. This chain is Type 4 prepilin-like proteins leader peptide-processing enzyme, found in Escherichia coli O78:H11 (strain H10407 / ETEC).